The chain runs to 300 residues: tRNA-cytidine(32) 2-sulfurtransferase (300 aa).

The short motif at 57-62 is the PP-loop motif element; the sequence is SGGKDS. Residues Cys132, Cys135, and Cys223 each coordinate [4Fe-4S] cluster.

The protein belongs to the TtcA family. In terms of assembly, homodimer. The cofactor is Mg(2+). It depends on [4Fe-4S] cluster as a cofactor.

The protein localises to the cytoplasm. It carries out the reaction cytidine(32) in tRNA + S-sulfanyl-L-cysteinyl-[cysteine desulfurase] + AH2 + ATP = 2-thiocytidine(32) in tRNA + L-cysteinyl-[cysteine desulfurase] + A + AMP + diphosphate + H(+). Its pathway is tRNA modification. Functionally, catalyzes the ATP-dependent 2-thiolation of cytidine in position 32 of tRNA, to form 2-thiocytidine (s(2)C32). The sulfur atoms are provided by the cysteine/cysteine desulfurase (IscS) system. The polypeptide is tRNA-cytidine(32) 2-sulfurtransferase (Xanthomonas campestris pv. campestris (strain 8004)).